The primary structure comprises 1023 residues: Hemolysin, chromosomal (1023 aa).

A run of 3 helical transmembrane segments spans residues 237–259 (IGAG…ILSN), 267–326 (KAAA…LSIA), and 364–410 (DASL…GILE). N6-myristoyl lysine attachment occurs at residues Lys-563 and Lys-689. Hemolysin-type calcium-binding repeat units follow at residues 731-748 (FGSK…DDHI), 749-766 (EGND…NDTL), 767-784 (SGGN…NDKL), 785-802 (IGGA…DDEL), 815-832 (SGGK…ADLL), and 833-850 (DGGE…NDIY). The segment covering 747–763 (HIEGNDGNDRLYGDKGN) has biased composition (basic and acidic residues). Residues 747 to 780 (HIEGNDGNDRLYGDKGNDTLSGGNGDDQLYGGDG) form a disordered region.

It belongs to the RTX prokaryotic toxin (TC 1.C.11) family. In terms of processing, myristoylated by HlyC; the toxin only becomes active when modified. Mainly myristoylated, while a minor fraction is acylated with pentadecanoyl (C15:0; 26%) and heptadecanoyl (C17:0; 6%) fatty acyl groups. Fatty acylation is involved in binding to host membranes and promotes the irreversible insertion of Hemolysin into the host cell membrane. Can be activated by both myristoylation and palmitoylation, but HlyC catalyzes lysine myristoylation.

It is found in the secreted. The protein localises to the host cell membrane. Bacterial hemolysins are exotoxins that attack blood cell membranes and cause cell rupture by forming a pore. In Escherichia coli, this protein is Hemolysin, chromosomal.